An 897-amino-acid polypeptide reads, in one-letter code: Mating-type protein ALPHA3 (897 aa).

Its function is as follows. Mating type proteins are sequence specific DNA-binding proteins that act as master switches in yeast differentiation by controlling gene expression in a cell type-specific fashion. Required for efficient mating as an alpha-cell. The chain is Mating-type protein ALPHA3 (HMLALPHA3) from Kluyveromyces lactis (strain ATCC 8585 / CBS 2359 / DSM 70799 / NBRC 1267 / NRRL Y-1140 / WM37) (Yeast).